Here is a 152-residue protein sequence, read N- to C-terminus: Xanthine-guanine phosphoribosyltransferase (152 aa).

Residues 37–38 (RG), Arg69, and 88–96 (DDLVDTGGT) contribute to the 5-phospho-alpha-D-ribose 1-diphosphate site. Arg69 contributes to the GMP binding site. Asp89 lines the Mg(2+) pocket. Positions 92 and 135 each coordinate guanine. Xanthine is bound by residues Asp92 and Ile135. GMP contacts are provided by residues 92–96 (DTGGT) and 134–135 (WI).

The protein belongs to the purine/pyrimidine phosphoribosyltransferase family. XGPT subfamily. In terms of assembly, homotetramer. It depends on Mg(2+) as a cofactor.

It is found in the cell inner membrane. The catalysed reaction is GMP + diphosphate = guanine + 5-phospho-alpha-D-ribose 1-diphosphate. It catalyses the reaction XMP + diphosphate = xanthine + 5-phospho-alpha-D-ribose 1-diphosphate. It carries out the reaction IMP + diphosphate = hypoxanthine + 5-phospho-alpha-D-ribose 1-diphosphate. The protein operates within purine metabolism; GMP biosynthesis via salvage pathway; GMP from guanine: step 1/1. Its pathway is purine metabolism; XMP biosynthesis via salvage pathway; XMP from xanthine: step 1/1. Its function is as follows. Purine salvage pathway enzyme that catalyzes the transfer of the ribosyl-5-phosphate group from 5-phospho-alpha-D-ribose 1-diphosphate (PRPP) to the N9 position of the 6-oxopurines guanine and xanthine to form the corresponding ribonucleotides GMP (guanosine 5'-monophosphate) and XMP (xanthosine 5'-monophosphate), with the release of PPi. To a lesser extent, also acts on hypoxanthine. The chain is Xanthine-guanine phosphoribosyltransferase from Serratia proteamaculans (strain 568).